The sequence spans 4910 residues: Midasin (4910 aa).

AAA-ATPase protomer stretches follow at residues 305–528 and 636–975; these read IQNS…DILF and MEQI…TDII. ATP is bound by residues 315 to 322 and 653 to 660; these read GKAGSGKT and GETGTGKT. Residues 695 to 803 are interaction with RIX1; it reads VNSKTVAVPI…KKFEAQSSSI (109 aa). The residue at position 1026 (Thr1026) is a Phosphothreonine. 4 AAA-ATPase protomer regions span residues 1054–1280, 1345–1624, 1732–1985, and 2036–2286; these read HYII…WALR, KGMR…VEFI, RVVR…QLLI, and VYES…DELH. Residues 1083–1090, 1368–1375, 1747–1754, and 2054–2061 contribute to the ATP site; these read GPTSSGKT, GETGCGKT, GSPGVGKT, and GPSNSGKT. Positions 2372–4075 are linker; that stretch reads EVGKWANNVL…DGEGAQNNNK (1704 aa). Ser2971 carries the post-translational modification Phosphoserine. Disordered regions lie at residues 4045-4547, 4555-4574, and 4579-4600; these read SPQP…EKMD, SDIDAHDANNDVDSKKSGFI, and SEEDFENELSNEHFSADQEDDS. Residues 4078-4088 are compositionally biased toward acidic residues; sequence EQDEDLTEDAQ. Basic and acidic residues predominate over residues 4089–4098; it reads NENKEQQDKD. Residues 4099-4154 are compositionally biased toward acidic residues; the sequence is ERDDENEDDAVEMEGDMAGELEDLSNGEENDDEDTDSEEEELDEEIDDLNEDDPNA. Residues 4155-4174 show a composition bias toward basic and acidic residues; sequence IDDKMWDDKASDNSKEKDTD. Composition is skewed to acidic residues over residues 4202–4244, 4251–4274, and 4288–4358; these read GDED…EDLE, ETLDLPEDMNLDSEHEESDEDVDM, and GNED…EEEL. Residue Ser4353 is modified to Phosphoserine. Positions 4359 to 4372 are enriched in basic and acidic residues; sequence KQDAAMEENKEKGG. Thr4388 is modified (phosphothreonine). 2 stretches are compositionally biased toward basic and acidic residues: residues 4435-4447 and 4481-4495; these read DVTKNNEESREEA and LEKNNERPDEFEHVE. The segment covering 4498 to 4516 has biased composition (polar residues); sequence NTETDTQALGSATQDQLQT. Acidic residues predominate over residues 4517 to 4531; that stretch reads IDEDMAIDDDREEQE. Ser4555 is subject to Phosphoserine. Positions 4557 to 4570 are enriched in basic and acidic residues; that stretch reads IDAHDANNDVDSKK. The VWFA domain occupies 4704 to 4899; that stretch reads QIMIALDDSK…SELPEMLSLI (196 aa).

The protein belongs to the midasin family. Associates with pre-60S ribosomes in the nucleoplasm. Interacts (via its hexameric AAA ATPase ring) with the RIX1 complex (via RIX1); this interaction is crucial for recruitment of MDN1 to the pre-ribosomal particle. Interacts (via VWFA/MIDAS domain) with YTM1 (via UBL domain). Interacts (via VWFA/MIDAS domain) with RSA4 (via UBL domain).

It localises to the nucleus. The protein resides in the nucleolus. It is found in the nucleoplasm. Its function is as follows. Nuclear chaperone required for maturation and nuclear export of pre-60S ribosome subunits. Functions at successive maturation steps to remove ribosomal factors at critical transition points, first driving the exit of early pre-60S particles from the nucleolus and then driving late pre-60S particles from the nucleus. At an early stage in 60S maturation, mediates the dissociation of the NOP7 complex (YTM1-ERB1-NOP7) from early pre-60S particles, rendering them competent for export from the nucleolus to the nucleoplasm. Subsequently recruited to the nucleoplasmic particles through interaction with the RIX1 complex. This binding is only possible if the 5S RNP at the central protuberance has undergone the rotation to complete its maturation. After remodeling, removes the ribosome biogenesis factor RSA4 in an ATP hydrolysis-driven step from pre-60S ribosomal subunits, rendering them competent for export from the nucleoplasm to the cytoplasm. Activates the GTPase activity of NOG2, which disengages from the pre-60S particle upon GTP hydrolysis, thus freeing its binding site for the nuclear export factor NMD3. The polypeptide is Midasin (MDN1) (Saccharomyces cerevisiae (strain ATCC 204508 / S288c) (Baker's yeast)).